Reading from the N-terminus, the 421-residue chain is Diaminobutyrate--2-oxoglutarate transaminase (421 aa).

Lysine 262 carries the N6-(pyridoxal phosphate)lysine modification.

This sequence belongs to the class-III pyridoxal-phosphate-dependent aminotransferase family. The cofactor is pyridoxal 5'-phosphate.

The enzyme catalyses L-2,4-diaminobutanoate + 2-oxoglutarate = L-aspartate 4-semialdehyde + L-glutamate. It participates in amine and polyamine biosynthesis; ectoine biosynthesis; L-ectoine from L-aspartate 4-semialdehyde: step 1/3. Functionally, catalyzes reversively the conversion of L-aspartate beta-semialdehyde (ASA) to L-2,4-diaminobutyrate (DABA) by transamination with L-glutamate. The polypeptide is Diaminobutyrate--2-oxoglutarate transaminase (ectB) (Vibrio parahaemolyticus serotype O3:K6 (strain RIMD 2210633)).